The chain runs to 217 residues: Aprataxin-like protein (217 aa).

The 134-residue stretch at 6–139 (ALKNYVTSPE…HIHVISKDFH (134 aa)) folds into the HIT domain. Interaction with DNA regions lie at residues 34–38 (DSFPK), 121–132 (HSVPSMANLHIH), and 144–148 (KNKKH). The Nucleophile role is filled by histidine 130. Residues cysteine 188, cysteine 191, histidine 205, and glutamate 209 each contribute to the Zn(2+) site.

Its subcellular location is the nucleus. It localises to the cytoplasm. It carries out the reaction a 5'-end adenosine-5'-diphospho-5'-2'-deoxyribonucleoside-DNA + H2O = a 5'-end 5'-phospho-2'-deoxyribonucleoside-DNA + AMP + 2 H(+). The enzyme catalyses a 5'-end adenosine-5'-diphospho-5'-ribonucleoside-2'-deoxyribonucleotide-DNA + H2O = a 5'-end 5'-phospho-ribonucleoside-2'-deoxyribonucleotide-DNA + AMP + 2 H(+). It catalyses the reaction a 3'-end 2'-deoxyribonucleotide-3'-diphospho-5'-guanosine-DNA + H2O = a 3'-end 2'-deoxyribonucleotide 3'-phosphate-DNA + GMP + 2 H(+). Its function is as follows. DNA-binding protein involved in single-strand DNA break repair, double-strand DNA break repair and base excision repair. Resolves abortive DNA ligation intermediates formed either at base excision sites, or when DNA ligases attempt to repair non-ligatable breaks induced by reactive oxygen species. Catalyzes the release of adenylate groups covalently linked to 5'-phosphate termini, resulting in the production of 5'-phosphate termini that can be efficiently rejoined. Likewise, catalyzes the release of 3'-linked guanosine (DNAppG) and inosine (DNAppI) from DNA, but has higher specific activity with 5'-linked adenosine (AppDNA). The protein is Aprataxin-like protein (HNT3) of Saccharomyces cerevisiae (strain ATCC 204508 / S288c) (Baker's yeast).